Here is a 234-residue protein sequence, read N- to C-terminus: Large ribosomal subunit protein uL1 (234 aa).

It belongs to the universal ribosomal protein uL1 family. In terms of assembly, part of the 50S ribosomal subunit.

Its function is as follows. Binds directly to 23S rRNA. The L1 stalk is quite mobile in the ribosome, and is involved in E site tRNA release. Functionally, protein L1 is also a translational repressor protein, it controls the translation of the L11 operon by binding to its mRNA. In Aliivibrio fischeri (strain ATCC 700601 / ES114) (Vibrio fischeri), this protein is Large ribosomal subunit protein uL1.